Consider the following 397-residue polypeptide: Acetate kinase (397 aa).

Asn7 lines the Mg(2+) pocket. Lys14 lines the ATP pocket. Arg90 is a substrate binding site. The active-site Proton donor/acceptor is the Asp147. ATP contacts are provided by residues 207–211 (HLGNG), 282–284 (DFR), and 330–334 (GIGEN). Residue Glu384 coordinates Mg(2+).

The protein belongs to the acetokinase family. As to quaternary structure, homodimer. Mg(2+) serves as cofactor. Requires Mn(2+) as cofactor.

The protein resides in the cytoplasm. It carries out the reaction acetate + ATP = acetyl phosphate + ADP. Its pathway is metabolic intermediate biosynthesis; acetyl-CoA biosynthesis; acetyl-CoA from acetate: step 1/2. Functionally, catalyzes the formation of acetyl phosphate from acetate and ATP. Can also catalyze the reverse reaction. In Agathobacter rectalis (strain ATCC 33656 / DSM 3377 / JCM 17463 / KCTC 5835 / VPI 0990) (Eubacterium rectale), this protein is Acetate kinase.